The sequence spans 369 residues: Choline kinase B2 (369 aa).

It belongs to the choline/ethanolamine kinase family. Mg(2+) serves as cofactor.

The enzyme catalyses choline + ATP = phosphocholine + ADP + H(+). Its pathway is phospholipid metabolism; phosphatidylcholine biosynthesis; phosphocholine from choline: step 1/1. In terms of biological role, catalyzes the first step in phosphatidylcholine biosynthesis. Phosphorylates choline. In Caenorhabditis elegans, this protein is Choline kinase B2 (ckb-2).